Here is a 287-residue protein sequence, read N- to C-terminus: Large ribosomal subunit protein uL2 (287 aa).

The interval 221–287 is disordered; that stretch reads RGSVMNPCDH…SKRSRGGRDS (67 aa). Over residues 258–287 the composition is skewed to basic residues; it reads KTRKRNKPSNRFVLRKRRRVSKRSRGGRDS.

It belongs to the universal ribosomal protein uL2 family. Part of the 50S ribosomal subunit. Forms a bridge to the 30S subunit in the 70S ribosome.

Its function is as follows. One of the primary rRNA binding proteins. Required for association of the 30S and 50S subunits to form the 70S ribosome, for tRNA binding and peptide bond formation. It has been suggested to have peptidyltransferase activity; this is somewhat controversial. Makes several contacts with the 16S rRNA in the 70S ribosome. In Prochlorococcus marinus (strain MIT 9211), this protein is Large ribosomal subunit protein uL2.